The sequence spans 261 residues: MSETEAAPVVAPAAEAAPAAEAPKAKAPKAKAPKQPKAPKAPKEPKAPKEKKPKAAPTHPPYIEMVKDAITTLKERNGSSLPALKKFIENKYGKDIHDKNFAKTLSQVVKTFVKGGKLVKVKGSFKLSEALKAKAKKSTPKKAKADGEAKPKKSEAKPKKAEAVKKTKAPKEKVERPKKEKKEKVEKKKATPKAEKPKKAATPKSAGKKKATPKPKAAPKSPAKKDAKPKKATPSKKAAPKKAPAKKSTPKAKEAKSKGKK.

Over residues 1 to 22 (MSETEAAPVVAPAAEAAPAAEA) the composition is skewed to low complexity. 2 disordered regions span residues 1-63 (MSET…PPYI) and 125-261 (FKLS…KGKK). The segment covering 41-50 (APKEPKAPKE) has biased composition (basic and acidic residues). The H15 domain occupies 58 to 129 (THPPYIEMVK…KVKGSFKLSE (72 aa)). The segment covering 133–142 (AKAKKSTPKK) has biased composition (basic residues). 2 consecutive repeat copies span residues 136–140 (KKSTP) and 188–192 (KKATP). The 7 X 5 AA repeats of K-K-[AS]-T-P stretch occupies residues 136-250 (KKSTPKKAKA…KKAPAKKSTP (115 aa)). Residues 139–142 (TPKK) mediate DNA binding. Residues 143 to 198 (AKADGEAKPKKSEAKPKKAEAVKKTKAPKEKVERPKKEKKEKVEKKKATPKAEKPK) show a composition bias toward basic and acidic residues. The 3; approximate repeat unit spans residues 199–203 (KAATP). 4 tandem repeats follow at residues 209-213 (KKATP), 230-234 (KKATP), 236-240 (KKAAP), and 246-250 (KKSTP). The span at 227 to 250 (AKPKKATPSKKAAPKKAPAKKSTP) shows a compositional bias: basic residues. The segment covering 251 to 261 (KAKEAKSKGKK) has biased composition (basic and acidic residues).

Belongs to the histone H1/H5 family.

It localises to the nucleus. Its subcellular location is the chromosome. In terms of biological role, histones H1 are necessary for the condensation of nucleosome chains into higher-order structures. The sequence is that of Histone H1-I (H1-I) from Volvox carteri (Green alga).